We begin with the raw amino-acid sequence, 355 residues long: Peptide chain release factor 1 (355 aa).

At Gln231 the chain carries N5-methylglutamine. A compositionally biased stretch (basic and acidic residues) spans 280 to 293 (KERKAKEQSERKDQ). The interval 280–307 (KERKAKEQSERKDQVGTGDRSGRIRTYN) is disordered.

The protein belongs to the prokaryotic/mitochondrial release factor family. Post-translationally, methylated by PrmC. Methylation increases the termination efficiency of RF1.

The protein resides in the cytoplasm. In terms of biological role, peptide chain release factor 1 directs the termination of translation in response to the peptide chain termination codons UAG and UAA. The chain is Peptide chain release factor 1 from Campylobacter hominis (strain ATCC BAA-381 / DSM 21671 / CCUG 45161 / LMG 19568 / NCTC 13146 / CH001A).